Here is a 201-residue protein sequence, read N- to C-terminus: FMN-dependent NADH:quinone oxidoreductase (201 aa).

Residues serine 9 and 16-18 (SYS) contribute to the FMN site.

Belongs to the azoreductase type 1 family. As to quaternary structure, homodimer. It depends on FMN as a cofactor.

The enzyme catalyses 2 a quinone + NADH + H(+) = 2 a 1,4-benzosemiquinone + NAD(+). It catalyses the reaction N,N-dimethyl-1,4-phenylenediamine + anthranilate + 2 NAD(+) = 2-(4-dimethylaminophenyl)diazenylbenzoate + 2 NADH + 2 H(+). In terms of biological role, quinone reductase that provides resistance to thiol-specific stress caused by electrophilic quinones. Functionally, also exhibits azoreductase activity. Catalyzes the reductive cleavage of the azo bond in aromatic azo compounds to the corresponding amines. In Mesomycoplasma hyopneumoniae (strain J / ATCC 25934 / NCTC 10110) (Mycoplasma hyopneumoniae), this protein is FMN-dependent NADH:quinone oxidoreductase.